An 802-amino-acid chain; its full sequence is Leucine--tRNA ligase (802 aa).

Residues 40 to 51 carry the 'HIGH' region motif; it reads PYPSGAGLHVGH. The 'KMSKS' region signature appears at 576–580; it reads KMSKS. ATP is bound at residue lysine 579.

This sequence belongs to the class-I aminoacyl-tRNA synthetase family.

The protein localises to the cytoplasm. It carries out the reaction tRNA(Leu) + L-leucine + ATP = L-leucyl-tRNA(Leu) + AMP + diphosphate. The protein is Leucine--tRNA ligase of Bacillus cereus (strain ATCC 14579 / DSM 31 / CCUG 7414 / JCM 2152 / NBRC 15305 / NCIMB 9373 / NCTC 2599 / NRRL B-3711).